The sequence spans 103 residues: Thioredoxin-1 (103 aa).

Residues 2–103 (VKQVSDSSEF…KLEASIKANL (102 aa)) enclose the Thioredoxin domain. Catalysis depends on nucleophile residues Cys30 and Cys33. Cys30 and Cys33 are oxidised to a cystine.

This sequence belongs to the thioredoxin family.

In terms of biological role, participates in various redox reactions through the reversible oxidation of its active center dithiol to a disulfide and catalyzes dithiol-disulfide exchange reactions. The chain is Thioredoxin-1 (trx1) from Schizosaccharomyces pombe (strain 972 / ATCC 24843) (Fission yeast).